We begin with the raw amino-acid sequence, 335 residues long: Phenylalanine--tRNA ligase alpha subunit (335 aa).

E262 serves as a coordination point for Mg(2+).

It belongs to the class-II aminoacyl-tRNA synthetase family. Phe-tRNA synthetase alpha subunit type 1 subfamily. As to quaternary structure, tetramer of two alpha and two beta subunits. Requires Mg(2+) as cofactor.

It localises to the cytoplasm. It catalyses the reaction tRNA(Phe) + L-phenylalanine + ATP = L-phenylalanyl-tRNA(Phe) + AMP + diphosphate + H(+). This Prochlorococcus marinus (strain MIT 9313) protein is Phenylalanine--tRNA ligase alpha subunit.